We begin with the raw amino-acid sequence, 481 residues long: Glutamine synthetase (481 aa).

Positions 22-106 (NEVEFVDFRF…VFCDVYDVYK (85 aa)) constitute a GS beta-grasp domain. The region spanning 114-481 (PRSIAKKALK…PFEFITTYSC (368 aa)) is the GS catalytic domain. Glutamate 139, glutamate 141, glutamate 223, and glutamate 230 together coordinate Mg(2+). L-glutamate contacts are provided by residues 274–275 (NG) and glycine 275. Mg(2+) is bound at residue histidine 279. Residues 281-283 (HVS) and serine 283 contribute to the ATP site. L-glutamate contacts are provided by arginine 331, glutamate 337, and arginine 349. Positions 349 and 354 each coordinate ATP. Glutamate 367 contacts Mg(2+). Arginine 369 serves as a coordination point for L-glutamate.

The protein belongs to the glutamine synthetase family. Oligomer of 12 subunits arranged in the form of two hexameric ring. The cofactor is Mg(2+).

It localises to the cytoplasm. The catalysed reaction is L-glutamate + NH4(+) + ATP = L-glutamine + ADP + phosphate + H(+). With respect to regulation, the activity of this enzyme could be controlled by adenylation under conditions of abundant glutamine. In terms of biological role, catalyzes the ATP-dependent biosynthesis of glutamine from glutamate and ammonia. The sequence is that of Glutamine synthetase from Helicobacter pylori (strain J99 / ATCC 700824) (Campylobacter pylori J99).